A 35-amino-acid polypeptide reads, in one-letter code: MSDIN-like toxin proprotein 6 (35 aa).

The propeptide occupies 1–10; it reads MSDINGTRLP. Residues 11–20 constitute a cross-link (cyclopeptide (Ile-Pro)); sequence IPGLIPLGIP. Residues 21-35 constitute a propeptide that is removed on maturation; sequence CVSDDVNPTLTRGER.

It belongs to the MSDIN fungal toxin family. Post-translationally, processed by the macrocyclase-peptidase enzyme POPB to yield a toxic cyclic decapeptide. POPB first removes 10 residues from the N-terminus. Conformational trapping of the remaining peptide forces the enzyme to release this intermediate rather than proceed to macrocyclization. The enzyme rebinds the remaining peptide in a different conformation and catalyzes macrocyclization of the N-terminal 10 residues.

Probable toxin that belongs to the MSDIN-like toxin family responsible for a large number of food poisoning cases and deaths. This is MSDIN-like toxin proprotein 6 from Amanita bisporigera (Destroying angel).